The following is a 194-amino-acid chain: Imidazoleglycerol-phosphate dehydratase (194 aa).

Belongs to the imidazoleglycerol-phosphate dehydratase family.

The protein localises to the cytoplasm. It catalyses the reaction D-erythro-1-(imidazol-4-yl)glycerol 3-phosphate = 3-(imidazol-4-yl)-2-oxopropyl phosphate + H2O. The protein operates within amino-acid biosynthesis; L-histidine biosynthesis; L-histidine from 5-phospho-alpha-D-ribose 1-diphosphate: step 6/9. This chain is Imidazoleglycerol-phosphate dehydratase, found in Listeria monocytogenes serovar 1/2a (strain ATCC BAA-679 / EGD-e).